The sequence spans 52 residues: Large ribosomal subunit protein eL39 (52 aa).

The protein belongs to the eukaryotic ribosomal protein eL39 family.

The protein is Large ribosomal subunit protein eL39 of Caldivirga maquilingensis (strain ATCC 700844 / DSM 13496 / JCM 10307 / IC-167).